The sequence spans 1040 residues: Multidrug resistance protein MdtB (1040 aa).

The next 12 membrane-spanning stretches (helical) occupy residues 16–36 (FIMR…AGII), 347–367 (LMMA…NIPA), 369–389 (IIPG…MVFL), 396–416 (LTLM…IVVI), 440–460 (IGFT…PLLF), 472–492 (FAIT…TLTP), 537–557 (WLTL…WVFI), 863–883 (LGST…VLGI), 888–908 (FIHP…ALLA), 911–931 (IAGS…IGIV), 968–988 (ILMT…STGV), and 998–1018 (IGMV…TPVI).

Belongs to the resistance-nodulation-cell division (RND) (TC 2.A.6) family. MdtB subfamily. Part of a tripartite efflux system composed of MdtA, MdtB and MdtC. MdtB forms a heteromultimer with MdtC.

The protein resides in the cell inner membrane. Its function is as follows. The MdtABC tripartite complex confers resistance against novobiocin and deoxycholate. The polypeptide is Multidrug resistance protein MdtB (Escherichia coli O139:H28 (strain E24377A / ETEC)).